The following is a 115-amino-acid chain: U3-lycotoxin-Ls1k (115 aa).

The N-terminal stretch at 1 to 20 (MKFVLLFGVLVVTLFSYSSA) is a signal peptide. The propeptide occupies 21-44 (EMLDDFDQADEDELLSLIEKEEAR). Intrachain disulfides connect C48–C63, C55–C72, C62–C87, and C74–C85.

Belongs to the neurotoxin 19 (CSTX) family. 01 subfamily. As to expression, expressed by the venom gland.

It is found in the secreted. The chain is U3-lycotoxin-Ls1k from Lycosa singoriensis (Wolf spider).